Reading from the N-terminus, the 277-residue chain is Acyl-coenzyme A thioesterase MBLAC2 (277 aa).

Positions 80, 82, 84, 85, 167, 186, and 228 each coordinate Zn(2+).

This sequence belongs to the metallo-beta-lactamase superfamily. Glyoxalase II family. It depends on Zn(2+) as a cofactor.

It localises to the endoplasmic reticulum membrane. It is found in the cell membrane. It carries out the reaction hexadecanoyl-CoA + H2O = hexadecanoate + CoA + H(+). The enzyme catalyses dodecanoyl-CoA + H2O = dodecanoate + CoA + H(+). The catalysed reaction is tetradecanoyl-CoA + H2O = tetradecanoate + CoA + H(+). It catalyses the reaction octadecanoyl-CoA + H2O = octadecanoate + CoA + H(+). It carries out the reaction a beta-lactam + H2O = a substituted beta-amino acid. Acyl-CoA thioesterases are a group of enzymes that catalyze the hydrolysis of acyl-CoAs to the free fatty acid and coenzyme A (CoASH), providing the potential to regulate intracellular levels of acyl-CoAs, free fatty acids and CoASH. Has an acyl-CoA thioesterase activity towards the long chain fatty acyl-CoA thioester palmitoyl-CoA (hexadecanoyl-CoA; C16:0-CoA). Displays a substrate preference for fatty acyl-CoAs with chain-lengths C12-C18. In Gallus gallus (Chicken), this protein is Acyl-coenzyme A thioesterase MBLAC2 (MBLAC2).